The following is a 357-amino-acid chain: Red-sensitive opsin-1 (357 aa).

Residues 1–49 (MAEHWGDAIYAARRKGDETTREAMFTYTNSNNTKDPFEGPNYHIAPRWV) are Extracellular-facing. The N-linked (GlcNAc...) asparagine glycan is linked to asparagine 31. The chain crosses the membrane as a helical span at residues 50-74 (YNVATVWMFFVVVASTFTNGLVLVA). Residues 75-86 (TAKFKKLRHPLN) are Cytoplasmic-facing. A helical transmembrane segment spans residues 87–112 (WILVNLAIADLGETLFASTISVINQF). Residues 113 to 126 (FGYFILGHPMCIFE) are Extracellular-facing. The cysteines at positions 123 and 200 are disulfide-linked. Residues 127-146 (GYTVSVCGIAALWSLTVISW) traverse the membrane as a helical segment. The Cytoplasmic portion of the chain corresponds to 147-165 (ERWVVVCKPFGNVKFDAKW). The helical transmembrane segment at 166–189 (ASAGIIFSWVWAAAWCAPPIFGWS) threads the bilayer. Topologically, residues 190–215 (RYWPHGLKTSCGPDVFSGSEDPGVQS) are extracellular. Residues 216-243 (YMVVLMITCCIIPLAIIILCYIAVYLAI) form a helical membrane-spanning segment. The Cytoplasmic segment spans residues 244 to 265 (HAVAQQQKDSESTQKAEKEVSR). The chain crosses the membrane as a helical span at residues 266-289 (MVVVMIFAYCFCWGPYTFFACFAA). Residues 290–297 (ANPGYAFH) lie on the Extracellular side of the membrane. A helical transmembrane segment spans residues 298–322 (PLAAAMPAYFAKSATIYNPVIYVFM). Position 309 is an N6-(retinylidene)lysine (lysine 309). Topologically, residues 323-357 (NRQFRVCIMQLFGKKVDDGSEVSTSKTEVSSVAPA) are cytoplasmic.

Belongs to the G-protein coupled receptor 1 family. Opsin subfamily. Post-translationally, phosphorylated on some or all of the serine and threonine residues present in the C-terminal region. As to expression, retinal double cone principal photoreceptor cell outer segments.

Its subcellular location is the membrane. In terms of biological role, visual pigments are the light-absorbing molecules that mediate vision. They consist of an apoprotein, opsin, covalently linked to cis-retinal. The polypeptide is Red-sensitive opsin-1 (opn1lw1) (Danio rerio (Zebrafish)).